The chain runs to 330 residues: Protein RecA (330 aa).

66-73 is an ATP binding site; sequence GPESSGKT.

Belongs to the RecA family.

Its subcellular location is the cytoplasm. Can catalyze the hydrolysis of ATP in the presence of single-stranded DNA, the ATP-dependent uptake of single-stranded DNA by duplex DNA, and the ATP-dependent hybridization of homologous single-stranded DNAs. It interacts with LexA causing its activation and leading to its autocatalytic cleavage. The protein is Protein RecA of Bacteroides thetaiotaomicron (strain ATCC 29148 / DSM 2079 / JCM 5827 / CCUG 10774 / NCTC 10582 / VPI-5482 / E50).